We begin with the raw amino-acid sequence, 29 residues long: Lambda-theraphotoxin-Ec2c (29 aa).

3 disulfides stabilise this stretch: Cys2/Cys16, Cys9/Cys21, and Cys15/Cys25.

Belongs to the neurotoxin 30 (phrixotoxin) family. Expressed by the venom gland.

The protein resides in the secreted. In terms of biological role, both insecticidal and vertebrate neurotoxin that potently blocks insect calcium-activated potassium (BKCa) channels (Slo-type) in cockroach dorsal unpaired median (DUM) neurons (IC(50)=24.6 nM). This occurs in the absence of any shifts in the voltage dependence of activation. May interact with the turret and/or loop region of the external entrance to the channel and does not project deeply into the pore of the channel. Also shows toxicity to mice by introcerebroventicular injection. This is Lambda-theraphotoxin-Ec2c from Eucratoscelus constrictus (African red-rump baboon spider).